The chain runs to 143 residues: Putative complexin-1 (143 aa).

The segment at 16–72 (EVTGGLGMKDDGGEKTETGEDPEVIAARLEQEERRKEKHRKMENEREKMRQGIRDKY) is disordered. 2 stretches are compositionally biased toward basic and acidic residues: residues 23-33 (MKDDGGEKTET) and 44-72 (LEQEERRKEKHRKMENEREKMRQGIRDKY). Residues 40–71 (IAARLEQEERRKEKHRKMENEREKMRQGIRDK) are a coiled coil.

It belongs to the complexin/synaphin family.

Its subcellular location is the cytoplasm. The protein localises to the cytosol. Its function is as follows. Positively regulates a late step in synaptic vesicle exocytosis. This Caenorhabditis elegans protein is Putative complexin-1 (cpx-1).